The primary structure comprises 151 residues: Deoxyuridine 5'-triphosphate nucleotidohydrolase (151 aa).

Residues 70–72 (RSG), asparagine 83, 87–89 (LID), and lysine 97 contribute to the substrate site.

This sequence belongs to the dUTPase family. Mg(2+) is required as a cofactor.

The enzyme catalyses dUTP + H2O = dUMP + diphosphate + H(+). It functions in the pathway pyrimidine metabolism; dUMP biosynthesis; dUMP from dCTP (dUTP route): step 2/2. Functionally, this enzyme is involved in nucleotide metabolism: it produces dUMP, the immediate precursor of thymidine nucleotides and it decreases the intracellular concentration of dUTP so that uracil cannot be incorporated into DNA. In Idiomarina loihiensis (strain ATCC BAA-735 / DSM 15497 / L2-TR), this protein is Deoxyuridine 5'-triphosphate nucleotidohydrolase.